The sequence spans 185 residues: Ribosome-recycling factor (185 aa).

Belongs to the RRF family.

The protein resides in the cytoplasm. In terms of biological role, responsible for the release of ribosomes from messenger RNA at the termination of protein biosynthesis. May increase the efficiency of translation by recycling ribosomes from one round of translation to another. The polypeptide is Ribosome-recycling factor (Pectobacterium atrosepticum (strain SCRI 1043 / ATCC BAA-672) (Erwinia carotovora subsp. atroseptica)).